A 357-amino-acid chain; its full sequence is MADAATISKLEEGFKKLQGATDCKSLLKKYLTKDVFDQLKAKKTSLGATLLDVIQSGVENLDSGVGVYAPDAEAYTLFAPLFDPIIEDYHKGFKQTDKHPNKDFGDVNQFVNVDPDGKFVISTRVRCGRSMEGYPFNPCLTEAQYKEMEAKVFSTLSSLEGELKGSFYPLTGMAKDVQQKLIDDHFLFKEGDRFLQAANACRYWPSGRGIYHNDNKTFLVWCNEEDHLRIISMQMGGDLGQVYRRLVSAVNEIEKRVPFSHHDRLGFLTFCPTNLGTTVRASVHIKLPKLAANREKLEEVAGKYSLQVRGTRGEHTEAEGGIYDISNKRRMGLTEFQAVKEMQDGILELIKIEKEMQ.

Ala-2 bears the N-acetylalanine mark. The Phosphagen kinase N-terminal domain occupies 9–91 (KLEEGFKKLQ…FDPIIEDYHK (83 aa)). Residue 64–68 (GVGVY) coordinates L-arginine. The Phosphagen kinase C-terminal domain occupies 119-356 (FVISTRVRCG…LELIKIEKEM (238 aa)). ATP-binding positions include 122 to 126 (STRVR) and His-185. Glu-225 lines the L-arginine pocket. ATP is bound at residue Arg-229. Cys-271 serves as a coordination point for L-arginine. ATP contacts are provided by residues 280-284 (RASVH) and 309-314 (RGTRGE). Glu-314 lines the L-arginine pocket.

This sequence belongs to the ATP:guanido phosphotransferase family.

It carries out the reaction L-arginine + ATP = N(omega)-phospho-L-arginine + ADP + H(+). The polypeptide is Arginine kinase (Pachygrapsus marmoratus (Marbled rock crab)).